Here is a 174-residue protein sequence, read N- to C-terminus: AWQYFALEGVVTGGNYRKQGCCRPYEFPPCGRHGKEPYYGECYDTAKTPKCQKTCQRGYLKAYKEDKHFGKSAYRLPNNVKAIQRDIMKNGPVVAGFIVYEDFAHYKSGIYKHTAGRMTGGHAVKIIGWGKEKGTPYWLIANSWHDDWGEKGFYRMIRGINNCRIEEMVFAGIV.

2 cysteine pairs are disulfide-bonded: cysteine 22–cysteine 55 and cysteine 30–cysteine 42. Active-site residues include histidine 122 and asparagine 142.

This sequence belongs to the peptidase C1 family.

Expression of the protease correlates with blood-feeding and suggests a role for the protease in blood digestion. This Ostertagia ostertagi (Brown stomach worm) protein is Cathepsin B-like cysteine proteinase 3 (CP-3).